We begin with the raw amino-acid sequence, 223 residues long: Sigma non-opioid intracellular receptor 1 (223 aa).

Residues 1–7 (MAVLSSR) lie on the Lumenal side of the membrane. Residues 8 to 29 (AMRAALGLAVLAVVIQLLRTWL) traverse the membrane as a helical segment. Residues 30 to 223 (SSKSYLFNQK…HTYLSELGLS (194 aa)) lie on the Cytoplasmic side of the membrane. The important for ligand-binding stretch occupies residues 98–105 (SLTEYILL). The segment at 176–223 (FIPSTMGFALADTIFSTQDFCTLFYTFRIYARCLLLETHTYLSELGLS) is C-terminal hydrophobic region.

Belongs to the ERG2 family. Homotrimer.

It is found in the nucleus inner membrane. It localises to the nucleus outer membrane. The protein localises to the nucleus envelope. The protein resides in the cytoplasmic vesicle. Its subcellular location is the endoplasmic reticulum membrane. It is found in the membrane. Functionally, may function in lipid transport from the endoplasmic reticulum and be involved in a wide array of cellular functions probably through regulation of the biogenesis of lipid microdomains at the plasma membrane. May regulate calcium efflux at the endoplasmic reticulum. The protein is Sigma non-opioid intracellular receptor 1 (SIGMAR1) of Taricha granulosa (Roughskin newt).